Reading from the N-terminus, the 156-residue chain is Small ribosomal subunit protein uS7A/uS7B (156 aa).

This sequence belongs to the universal ribosomal protein uS7 family. Part of the 30S ribosomal subunit. Contacts proteins S9 and S11.

In terms of biological role, one of the primary rRNA binding proteins, it binds directly to 16S rRNA where it nucleates assembly of the head domain of the 30S subunit. Is located at the subunit interface close to the decoding center, probably blocks exit of the E-site tRNA. This is Small ribosomal subunit protein uS7A/uS7B from Cereibacter sphaeroides (strain ATCC 17029 / ATH 2.4.9) (Rhodobacter sphaeroides).